A 138-amino-acid chain; its full sequence is MLQPARTKYRKMMKGRMRGKAYRGSDLNQGEYGLQATECGWLTARQIEAARVAITRYVKRGGKLWIRVFPDKPITKKPAETRMGTGKGNVEYYVAVVKPGRVLYELAGVDDESAKKAFHLAAHKLPVATKLVKRGSTL.

It belongs to the universal ribosomal protein uL16 family. In terms of assembly, part of the 50S ribosomal subunit.

In terms of biological role, binds 23S rRNA and is also seen to make contacts with the A and possibly P site tRNAs. The chain is Large ribosomal subunit protein uL16 from Anaeromyxobacter sp. (strain Fw109-5).